The primary structure comprises 970 residues: Transposase for insertion sequence element IS1071 in transposon Tn5271 (970 aa).

This sequence belongs to the transposase 7 family.

Functionally, required for transposition of transposon Tn5271. This is Transposase for insertion sequence element IS1071 in transposon Tn5271 from Comamonas testosteroni (Pseudomonas testosteroni).